The primary structure comprises 85 residues: Large ribosomal subunit protein bL27 (85 aa).

The segment at 1–21 (MAHKKGLGSTKNGRDSQAKRL) is disordered.

This sequence belongs to the bacterial ribosomal protein bL27 family.

This is Large ribosomal subunit protein bL27 from Thermus thermophilus (strain ATCC BAA-163 / DSM 7039 / HB27).